A 70-amino-acid polypeptide reads, in one-letter code: Small ribosomal subunit protein bS18 (70 aa).

This sequence belongs to the bacterial ribosomal protein bS18 family. As to quaternary structure, part of the 30S ribosomal subunit. Forms a tight heterodimer with protein bS6.

Binds as a heterodimer with protein bS6 to the central domain of the 16S rRNA, where it helps stabilize the platform of the 30S subunit. The protein is Small ribosomal subunit protein bS18 of Salinibacter ruber (strain DSM 13855 / M31).